The sequence spans 354 residues: Tetraacyldisaccharide 4'-kinase (354 aa).

53–60 is a binding site for ATP; the sequence is AWGGTGKT.

The protein belongs to the LpxK family.

It carries out the reaction a lipid A disaccharide + ATP = a lipid IVA + ADP + H(+). It participates in glycolipid biosynthesis; lipid IV(A) biosynthesis; lipid IV(A) from (3R)-3-hydroxytetradecanoyl-[acyl-carrier-protein] and UDP-N-acetyl-alpha-D-glucosamine: step 6/6. Transfers the gamma-phosphate of ATP to the 4'-position of a tetraacyldisaccharide 1-phosphate intermediate (termed DS-1-P) to form tetraacyldisaccharide 1,4'-bis-phosphate (lipid IVA). This is Tetraacyldisaccharide 4'-kinase from Nitratidesulfovibrio vulgaris (strain ATCC 29579 / DSM 644 / CCUG 34227 / NCIMB 8303 / VKM B-1760 / Hildenborough) (Desulfovibrio vulgaris).